We begin with the raw amino-acid sequence, 433 residues long: MKILLIGGGGREHAIAEGIKKSKHNPSLYALMAKKNPGIAALCEDFLLEKETEVEKVVEYAKARNIEMAFVGPEAPLAAGVADALWEAGIPVVGPKKSCAIIEFDKAWARNFMKKYGIEGCPEYEVFTEEKPAHDFIEKLGDVAVKPSGLTGGKGVKVMGDQLPDLKAAKAYTSELLEKGSVVIEERFIGEEFTLQAFVDGKSLVFFPAVQDHKRAYEGDLGPNTGGMGSYTDAGEILPFMLPEDLEKAKKIMQDTVKALSEETGIGYQGILYGQFILTASGPKVVEFNARFGDPEAMNVISLLETDFVDIMSAVVKGTLGNLPVSFSKKATVCKYAVPAGYPENPEKDSEVTVEDIGDASIYYASVYEKEGKVYTTSSRAIAVIGIAETIAAAEKIAQNALENLHGKLFFRKDIGTAALIQKRIDHMKELRG.

The ATP-grasp domain maps to 110–317 (RNFMKKYGIE…FVDIMSAVVK (208 aa)). 137-194 (IEKLGDVAVKPSGLTGGKGVKVMGDQLPDLKAAKAYTSELLEKGSVVIEERFIGEEFT) lines the ATP pocket. 3 residues coordinate Mg(2+): Gln-275, Glu-287, and Asn-289. Mn(2+)-binding residues include Gln-275, Glu-287, and Asn-289.

Belongs to the GARS family. The cofactor is Mg(2+). Mn(2+) is required as a cofactor.

It catalyses the reaction 5-phospho-beta-D-ribosylamine + glycine + ATP = N(1)-(5-phospho-beta-D-ribosyl)glycinamide + ADP + phosphate + H(+). It functions in the pathway purine metabolism; IMP biosynthesis via de novo pathway; N(1)-(5-phospho-D-ribosyl)glycinamide from 5-phospho-alpha-D-ribose 1-diphosphate: step 2/2. In Methanosarcina barkeri (strain Fusaro / DSM 804), this protein is Phosphoribosylamine--glycine ligase.